A 506-amino-acid chain; its full sequence is ATP synthase subunit alpha (506 aa).

Residue 171–178 (GDRKTGKT) participates in ATP binding.

Belongs to the ATPase alpha/beta chains family. As to quaternary structure, F-type ATPases have 2 components, CF(1) - the catalytic core - and CF(0) - the membrane proton channel. CF(1) has five subunits: alpha(3), beta(3), gamma(1), delta(1), epsilon(1). CF(0) has three main subunits: a(1), b(2) and c(9-12). The alpha and beta chains form an alternating ring which encloses part of the gamma chain. CF(1) is attached to CF(0) by a central stalk formed by the gamma and epsilon chains, while a peripheral stalk is formed by the delta and b chains.

Its subcellular location is the cell inner membrane. It catalyses the reaction ATP + H2O + 4 H(+)(in) = ADP + phosphate + 5 H(+)(out). In terms of biological role, produces ATP from ADP in the presence of a proton gradient across the membrane. The alpha chain is a regulatory subunit. The polypeptide is ATP synthase subunit alpha (Anaplasma phagocytophilum (strain HZ)).